The following is a 315-amino-acid chain: N-acetyl-D-glutamate racemase (315 aa).

Residues D147, E173, and D196 each coordinate Mg(2+).

This sequence belongs to the mandelate racemase/muconate lactonizing enzyme family. The cofactor is Mg(2+).

It catalyses the reaction N-acetyl-D-glutamate = N-acetyl-L-glutamate. It participates in amino-acid degradation. In terms of biological role, racemase involved in a deamination-independent D-glutamate degradation pathway, named the DgcN-DgcA pathway. Catalyzes the conversion of N-acetyl-D-glutamate to N-acetyl-L-glutamate. Also shows racemase activity towards the dipeptide L-Ala-D-Glu, a key constituent of peptidoglycan muropeptides, suggesting that it may also contribute to the degradation of peptidoglycans. The chain is N-acetyl-D-glutamate racemase from Pseudoalteromonas sp.